Reading from the N-terminus, the 230-residue chain is Heptaprenylglyceryl phosphate synthase (230 aa).

Lysine 12 contacts sn-glycerol 1-phosphate. Aspartate 14 and threonine 40 together coordinate Mg(2+). Sn-glycerol 1-phosphate is bound by residues 159 to 164 (YIEYSG), glycine 189, and 209 to 210 (GD).

This sequence belongs to the GGGP/HepGP synthase family. Group I subfamily. Homodimer. Mg(2+) is required as a cofactor.

It catalyses the reaction sn-glycerol 1-phosphate + all-trans-heptaprenyl diphosphate = 3-heptaprenyl-sn-glycero-1-phosphate + diphosphate. Its pathway is membrane lipid metabolism; glycerophospholipid metabolism. In terms of biological role, prenyltransferase that catalyzes in vivo the transfer of the heptaprenyl moiety of heptaprenyl pyrophosphate (HepPP; 35 carbon atoms) to the C3 hydroxyl of sn-glycerol-1-phosphate (G1P), producing heptaprenylglyceryl phosphate (HepGP). This reaction is an ether-bond-formation step in the biosynthesis of archaea-type G1P-based membrane lipids found in Bacillales. To a much lesser extent, is also able to use geranylgeranyl diphosphate (GGPP; C20) as the prenyl donor. The chain is Heptaprenylglyceryl phosphate synthase from Staphylococcus aureus (strain NCTC 8325 / PS 47).